The following is a 203-amino-acid chain: GTP cyclohydrolase 1 (203 aa).

3 residues coordinate Zn(2+): cysteine 87, histidine 90, and cysteine 158.

It belongs to the GTP cyclohydrolase I family. Toroid-shaped homodecamer, composed of two pentamers of five dimers.

It carries out the reaction GTP + H2O = 7,8-dihydroneopterin 3'-triphosphate + formate + H(+). Its pathway is cofactor biosynthesis; 7,8-dihydroneopterin triphosphate biosynthesis; 7,8-dihydroneopterin triphosphate from GTP: step 1/1. The polypeptide is GTP cyclohydrolase 1 (Xylella fastidiosa (strain 9a5c)).